The following is a 153-amino-acid chain: Large ribosomal subunit protein uL30 (153 aa).

This sequence belongs to the universal ribosomal protein uL30 family. In terms of assembly, part of the 50S ribosomal subunit.

This Methanocorpusculum labreanum (strain ATCC 43576 / DSM 4855 / Z) protein is Large ribosomal subunit protein uL30.